Consider the following 342-residue polypeptide: Tetraacyldisaccharide 4'-kinase (342 aa).

T68–T75 contacts ATP.

Belongs to the LpxK family.

It carries out the reaction a lipid A disaccharide + ATP = a lipid IVA + ADP + H(+). It functions in the pathway glycolipid biosynthesis; lipid IV(A) biosynthesis; lipid IV(A) from (3R)-3-hydroxytetradecanoyl-[acyl-carrier-protein] and UDP-N-acetyl-alpha-D-glucosamine: step 6/6. Functionally, transfers the gamma-phosphate of ATP to the 4'-position of a tetraacyldisaccharide 1-phosphate intermediate (termed DS-1-P) to form tetraacyldisaccharide 1,4'-bis-phosphate (lipid IVA). The chain is Tetraacyldisaccharide 4'-kinase from Burkholderia pseudomallei (strain K96243).